A 139-amino-acid polypeptide reads, in one-letter code: Actin-depolymerizing factor 1 (139 aa).

Residues alanine 5–leucine 139 form the ADF-H domain.

It belongs to the actin-binding proteins ADF family.

In terms of biological role, actin-depolymerizing protein. Severs actin filaments (F-actin) and binds to actin monomers. This chain is Actin-depolymerizing factor 1 (ADF1), found in Oryza sativa subsp. japonica (Rice).